Consider the following 372-residue polypeptide: UDP-N-acetylenolpyruvoylglucosamine reductase (372 aa).

One can recognise an FAD-binding PCMH-type domain in the interval 29 to 205 (VGPTARRLIT…LEVEFALDAS (177 aa)). The active site involves Arg-177. Ser-260 acts as the Proton donor in catalysis. Glu-364 is an active-site residue.

This sequence belongs to the MurB family. FAD is required as a cofactor.

Its subcellular location is the cytoplasm. It carries out the reaction UDP-N-acetyl-alpha-D-muramate + NADP(+) = UDP-N-acetyl-3-O-(1-carboxyvinyl)-alpha-D-glucosamine + NADPH + H(+). It participates in cell wall biogenesis; peptidoglycan biosynthesis. Its function is as follows. Cell wall formation. This is UDP-N-acetylenolpyruvoylglucosamine reductase from Mycobacterium avium (strain 104).